The chain runs to 309 residues: Agglutinin (309 aa).

An N-acetylmethionine modification is found at Met-1. Jacalin-type lectin domains lie at 4 to 148 and 163 to 308; these read FLTV…YVKI and PRGP…HMEY.

It belongs to the jacalin lectin family.

In terms of biological role, D-mannose/D-glucose-binding lectin. Binds N-linked high-mannose-type glycans. Has a preference for smaller (Man(2)-Man(6)) high-mannose-type glycans to larger (Man(7)-Man(9)) ones. Recognizes both alpha1-6 extended and alpha1-3 extended monoantennary glycans. The addition of alpha1-2Man to the Man-alpha1-3Man-beta branch results in a significant loss of affinity, but beta1-2GlcNAc has some affinity. Has less affinity for biantennary glycans, and affinity is very weak for the biantennary complex-type N-glycans with bisecting GlcNAc. No affinity is observed for tri- and tetra-antennary glycans. Has mitogenic and hemagglutinating activities. This Castanea crenata (Japanese chestnut) protein is Agglutinin.